The chain runs to 345 residues: Opioid-binding protein/cell adhesion molecule (345 aa).

An N-terminal signal peptide occupies residues 1 to 27; the sequence is MGVCGYLFLPWKCLVVVSLRLLFLVPT. Ig-like C2-type domains are found at residues 39 to 126, 136 to 219, and 223 to 310; these read PKAM…PKTS, PQIM…VKIT, and PPYI…ASIT. N-linked (GlcNAc...) asparagine glycans are attached at residues Asn-44, Asn-70, and Asn-140. Cysteines 57 and 115 form a disulfide. Cystine bridges form between Cys-157/Cys-202 and Cys-244/Cys-296. N-linked (GlcNAc...) asparagine glycosylation is found at Asn-285, Asn-293, and Asn-306. A lipid anchor (GPI-anchor amidated asparagine) is attached at Asn-322. The propeptide at 323–345 is removed in mature form; that stretch reads SASRALACLWLSGTFFAHFFIKF.

It belongs to the immunoglobulin superfamily. IgLON family.

It is found in the cell membrane. In terms of biological role, binds opioids in the presence of acidic lipids; probably involved in cell contact. The polypeptide is Opioid-binding protein/cell adhesion molecule (Opcml) (Rattus norvegicus (Rat)).